Consider the following 340-residue polypeptide: GTP 3',8-cyclase (340 aa).

In terms of domain architecture, Radical SAM core spans 8–227 (KLGRPIRDLR…TMIEQHFEID (220 aa)). Arg-17 lines the GTP pocket. Residues Cys-24 and Cys-28 each contribute to the [4Fe-4S] cluster site. Residue Tyr-30 coordinates S-adenosyl-L-methionine. Residue Cys-31 participates in [4Fe-4S] cluster binding. Arg-71 is a GTP binding site. Gly-75 contacts S-adenosyl-L-methionine. Thr-102 is a binding site for GTP. Ser-126 contacts S-adenosyl-L-methionine. GTP is bound at residue Lys-163. Met-197 contacts S-adenosyl-L-methionine. Residues Cys-261 and Cys-264 each coordinate [4Fe-4S] cluster. GTP is bound at residue 266-268 (RAR). Cys-278 serves as a coordination point for [4Fe-4S] cluster.

Belongs to the radical SAM superfamily. MoaA family. As to quaternary structure, monomer and homodimer. It depends on [4Fe-4S] cluster as a cofactor.

It catalyses the reaction GTP + AH2 + S-adenosyl-L-methionine = (8S)-3',8-cyclo-7,8-dihydroguanosine 5'-triphosphate + 5'-deoxyadenosine + L-methionine + A + H(+). It functions in the pathway cofactor biosynthesis; molybdopterin biosynthesis. Functionally, catalyzes the cyclization of GTP to (8S)-3',8-cyclo-7,8-dihydroguanosine 5'-triphosphate. This chain is GTP 3',8-cyclase, found in Staphylococcus aureus (strain Mu3 / ATCC 700698).